The chain runs to 331 residues: Aspartate carbamoyltransferase catalytic subunit (331 aa).

Residues arginine 76 and threonine 77 each coordinate carbamoyl phosphate. L-aspartate is bound at residue lysine 104. 3 residues coordinate carbamoyl phosphate: arginine 126, histidine 154, and glutamine 157. The L-aspartate site is built by arginine 187 and arginine 246. Residues glycine 287 and proline 288 each contribute to the carbamoyl phosphate site.

This sequence belongs to the aspartate/ornithine carbamoyltransferase superfamily. ATCase family. In terms of assembly, heterododecamer (2C3:3R2) of six catalytic PyrB chains organized as two trimers (C3), and six regulatory PyrI chains organized as three dimers (R2).

It catalyses the reaction carbamoyl phosphate + L-aspartate = N-carbamoyl-L-aspartate + phosphate + H(+). It functions in the pathway pyrimidine metabolism; UMP biosynthesis via de novo pathway; (S)-dihydroorotate from bicarbonate: step 2/3. Its function is as follows. Catalyzes the condensation of carbamoyl phosphate and aspartate to form carbamoyl aspartate and inorganic phosphate, the committed step in the de novo pyrimidine nucleotide biosynthesis pathway. In Dehalococcoides mccartyi (strain ATCC BAA-2100 / JCM 16839 / KCTC 5957 / BAV1), this protein is Aspartate carbamoyltransferase catalytic subunit.